A 396-amino-acid polypeptide reads, in one-letter code: RNA-binding motif protein, X chromosome (396 aa).

N-acetylmethionine; in Heterogeneous nuclear ribonucleoprotein G; alternate is present on M1. V2 carries the post-translational modification N-acetylvaline; in Heterogeneous nuclear ribonucleoprotein G, N-terminally processed. Residues 8 to 86 (GKLFIGGLNL…KAIKVAQATK (79 aa)) enclose the RRM domain. K22 participates in a covalent cross-link: Glycyl lysine isopeptide (Lys-Gly) (interchain with G-Cter in SUMO2). K30 carries the N6-acetyllysine modification. Residues K80 and K86 each participate in a glycyl lysine isopeptide (Lys-Gly) (interchain with G-Cter in SUMO2) cross-link. The tract at residues 84 to 396 (ATKPAFESGR…RGGGGGRSRY (313 aa)) is disordered. S91 is subject to Phosphoserine. Residues R122, R141, R162, and R170 each carry the omega-N-methylarginine modification. Residues 148 to 162 (RGPPPPRRAGPPPKR) show a composition bias toward pro residues. Composition is skewed to basic and acidic residues over residues 185–205 (RGRD…RRDP) and 241–275 (YTYR…DYAD). The segment at 186–236 (GRDGYEGPPRRDPPPPRRDPYLGSREGGYSPRDGYSSRDYSSARDARDFAP) is necessary for the association to nascent RNAPII transcripts and nuclear localization. A compositionally biased stretch (gly residues) spans 323-332 (YGGGRDGYAG). The segment covering 334–350 (RSERYSGGRDRVGRADR) has biased composition (basic and acidic residues). A phosphoserine mark is found at S335 and S355. A necessary for RNA-binding region spans residues 336 to 396 (ERYSGGRDRV…RGGGGGRSRY (61 aa)).

Homomultimer. Found in the supraspliceosome complex. Identified in the spliceosome C complex. Forms a complex with ILF2, ILF3, YLPM1, KHDRBS1, NCOA5 and PPP1CA. Interacts with CLK2, KHDRBS2, KHDRBS3, SAFB/SAFB1, TRA2B and YTHDC1. Interacts with ERAP1; the interaction is RNA-independent. Post-translationally, O-glycosylated. In terms of processing, arg-185 is dimethylated, probably to asymmetric dimethylarginine.

Its subcellular location is the nucleus. Its function is as follows. RNA-binding protein that plays several role in the regulation of pre- and post-transcriptional processes. Implicated in tissue-specific regulation of gene transcription and alternative splicing of several pre-mRNAs. Binds to and stimulates transcription from the tumor suppressor TXNIP gene promoter; may thus be involved in tumor suppression. When associated with SAFB, binds to and stimulates transcription from the SREBF1 promoter. Associates with nascent mRNAs transcribed by RNA polymerase II. Component of the supraspliceosome complex that regulates pre-mRNA alternative splice site selection. Can either activate or suppress exon inclusion; acts additively with TRA2B to promote exon 7 inclusion of the survival motor neuron SMN2. Represses the splicing of MAPT/Tau exon 10. Binds preferentially to single-stranded 5'-CC[A/C]-rich RNA sequence motifs localized in a single-stranded conformation; probably binds RNA as a homodimer. Binds non-specifically to pre-mRNAs. Also plays a role in the cytoplasmic TNFR1 trafficking pathways; promotes both the IL-1-beta-mediated inducible proteolytic cleavage of TNFR1 ectodomains and the release of TNFR1 exosome-like vesicles to the extracellular compartment. The sequence is that of RNA-binding motif protein, X chromosome (RBMX) from Bos taurus (Bovine).